The chain runs to 248 residues: UPF0246 protein MYPE6270 (248 aa).

Belongs to the UPF0246 family.

The chain is UPF0246 protein MYPE6270 from Malacoplasma penetrans (strain HF-2) (Mycoplasma penetrans).